The sequence spans 1784 residues: Sodium channel protein type 4 subunit alpha B (1784 aa).

Over 1 to 130 (MARLLPPTGT…RAAIRILIHS (130 aa)) the chain is Cytoplasmic. The interval 29-48 (AEEAAEQERMKEQNVKVAEE) is disordered. The I repeat unit spans residues 112 to 429 (CLSPFNPVRR…VVAMAYAEQN (318 aa)). A helical transmembrane segment spans residues 131–149 (LFSLVIMLTILTNCVFMAM). Topologically, residues 150-156 (SDPPGWS) are extracellular. Residues 157–177 (KILEYVFTGIYTFEAMVKVLS) traverse the membrane as a helical segment. The Cytoplasmic portion of the chain corresponds to 178–191 (RGFCIGDFTFLRDP). The chain crosses the membrane as a helical span at residues 192 to 209 (WNWLDFMVISMAYLTEFV). The Extracellular segment spans residues 210-215 (DLGNIS). N-linked (GlcNAc...) asparagine glycosylation is present at N213. Residues 216–232 (ALRTFRVLRALKTITVI) form a helical membrane-spanning segment. Over 233-251 (PGLKTIVGALIQSVKKLAD) the chain is Cytoplasmic. The chain crosses the membrane as a helical span at residues 252 to 271 (VMILTVFCLSVFALIGLQLF). The Extracellular segment spans residues 272-366 (MGNLRQKCVL…PNYGYTSYDN (95 aa)). C279 and C335 are disulfide-bonded. Residues N291, N304, and N337 are each glycosylated (N-linked (GlcNAc...) asparagine). C344 and C350 are oxidised to a cystine. The segment at residues 367–391 (FGWAFLALFRLMTQDFWENLFQLTL) is an intramembrane region (pore-forming). Residues 392-398 (RAAGKTY) lie on the Extracellular side of the membrane. The helical transmembrane segment at 399–419 (MIFFVVIIFLGSFYLINLILA) threads the bilayer. The Cytoplasmic segment spans residues 420–568 (VVAMAYAEQN…RIVYLFVMDP (149 aa)). A disordered region spans residues 455–478 (EQKNGMVNGSKTSLSSKKKGDNDQ). An II repeat occupies 550–821 (CCIPWVKFKR…QIAISRITRG (272 aa)). A helical transmembrane segment spans residues 569–587 (FVDLGITLCIVLNTVFMAM). Over 588-598 (EHYPMSVHVEE) the chain is Extracellular. A helical membrane pass occupies residues 599–618 (VLAIGNLVFTGIFAAEMVLK). The Cytoplasmic portion of the chain corresponds to 619–632 (LIALDPYYYFQVGW). Residues 633-652 (NIFDSIIVTMSLVELMLADV) traverse the membrane as a helical segment. Residues 653-654 (EG) lie on the Extracellular side of the membrane. A helical transmembrane segment spans residues 655–672 (LSVLRSFRLMRVFKLAKS). Over 673 to 688 (WPTLNMLIKIIGNSVG) the chain is Cytoplasmic. A helical transmembrane segment spans residues 689–707 (ALGNLTLVLAIIVFIFAVV). The Extracellular segment spans residues 708–736 (GMQLFGKSYTDSVCKISSDCELPRWHMAD). A disulfide bond links C721 and C727. An intramembrane region (pore-forming) is located at residues 737–757 (FFHAFLIIFRVLCGEWIETMW). Topologically, residues 758-768 (DCMEVAGQGMC) are extracellular. C759 and C768 are disulfide-bonded. Residues 769-787 (IIVFMMVMVIGNLVVLNLF) traverse the membrane as a helical segment. The Cytoplasmic segment spans residues 788-973 (LALLLSSFSG…TCFAIVEHSY (186 aa)). The disordered stretch occupies residues 870 to 928 (PIANGESDDDDGNGSSEDEDDEGRDINMKKKNGDESSTCSTVDKPPEVEDLVEEEEEDL). The segment covering 875–892 (ESDDDDGNGSSEDEDDEG) has biased composition (acidic residues). Basic and acidic residues predominate over residues 893-903 (RDINMKKKNGD). Residues 917–928 (VEDLVEEEEEDL) are compositionally biased toward acidic residues. One copy of the III repeat lies at 954–1269 (KGKAWWNFRK…KKYYNAMKKL (316 aa)). The helical transmembrane segment at 974 to 991 (FETFIIFMILLSSGALAF) threads the bilayer. Residues 992 to 1004 (EDIYIEQRRMIKI) are Extracellular-facing. The helical transmembrane segment at 1005–1023 (ILEYADQVFTYVFVVEMLL) threads the bilayer. The Cytoplasmic segment spans residues 1024-1037 (KWVAYGFKVYFTNA). A helical transmembrane segment spans residues 1038-1056 (WCWLDFLIVDVSLISLTAN). Residues 1057–1064 (ILGYSELG) are Extracellular-facing. A helical membrane pass occupies residues 1065–1083 (AIKSLRTLRALRPLRALSR). At 1084–1101 (FEGMRVVVVNALVGAIPS) the chain is on the cytoplasmic side. The helical transmembrane segment at 1102 to 1121 (IFNVLLVCLIFWLIFSIMGV) threads the bilayer. Residues 1122–1173 (NLFAGKFYYCFNETSEEVFDHNVVNNKTDCYELMEFHPEVRWMNGKINFDNV) lie on the Extracellular side of the membrane. An intrachain disulfide couples C1131 to C1151. 2 N-linked (GlcNAc...) asparagine glycosylation sites follow: N1133 and N1147. Positions 1174-1195 (GMGYLALLQVATFKGWMDIMYS) form an intramembrane region, pore-forming. Over 1196-1212 (AVDSRAIESQPVYEANL) the chain is Extracellular. Residues 1213–1234 (YMYIYFVIFIIFGSFFTLNLFI) traverse the membrane as a helical segment. The Cytoplasmic portion of the chain corresponds to 1235 to 1297 (GVIIDNFNQQ…LVFDFVTQQF (63 aa)). The segment at 1253–1255 (IFM) is important for rapid channel inactivation. An IV repeat occupies 1278-1575 (IPRPTNCCQG…WEKFDPTASQ (298 aa)). A helical transmembrane segment spans residues 1298–1315 (FDIFIMVMICLNMVTMMV). Residues 1316–1326 (ETDDQSAEIEE) lie on the Extracellular side of the membrane. The helical transmembrane segment at 1327 to 1345 (ILFYINFAFIILFTGECVL) threads the bilayer. At 1346–1357 (KITALRYHYFSI) the chain is on the cytoplasmic side. Residues 1358–1375 (GWNIFDFVVVILSILGIG) traverse the membrane as a helical segment. Over 1376 to 1388 (LADLIEKYFVSPT) the chain is Extracellular. A helical membrane pass occupies residues 1389–1405 (LFRVIRLARIGRVLRLI). At 1406 to 1424 (RGAKGIRTLLFALMMSLPA) the chain is on the cytoplasmic side. A helical membrane pass occupies residues 1425–1442 (LFNIGLLLFLIMFIFSIF). At 1443-1464 (GMSNFAYVKKEVGIDDMMNFET) the chain is on the extracellular side. Residues 1465-1487 (FGNSIICMFMITTSAGWDGLLAP) constitute an intramembrane region (pore-forming). The Extracellular segment spans residues 1488–1516 (ILNSPPDCDPDVDNPGSTTRGNCGNAAVG). A disulfide bridge connects residues C1495 and C1510. Residues 1517-1539 (IVFFCSYIVMSFLVVVNMYIAII) traverse the membrane as a helical segment. Residues 1540–1784 (LENFNVATEE…AADNLRESIV (245 aa)) are Cytoplasmic-facing. Positions 1669–1698 (EEVAASTIQRAYRSHILKRCVKQASYMYRD) constitute an IQ domain.

The protein belongs to the sodium channel (TC 1.A.1.10) family. Nav1.4/SCN4A subfamily. In terms of assembly, voltage-gated sodium (Nav) channels consist of an ion-conducting alpha subunit which is functional on its own associated with regulatory beta subunits. Post-translationally, lacks the cysteine which covalently binds the conotoxin GVIIJ. This cysteine (position 719) is speculated in other sodium channel subunits alpha to be implied in covalent binding with the sodium channel subunit beta-2 or beta-4. Expressed in skeletal muscle, heart, brain, spinal cord, and eye.

It is found in the cell membrane. The catalysed reaction is Na(+)(in) = Na(+)(out). In terms of biological role, pore-forming subunit of a voltage-gated sodium (Nav) channel that directly mediates the depolarizing phase of action potentials in excitable membranes. Navs, also called VGSCs (voltage-gated sodium channels) or VDSCs (voltage-dependent sodium channels), operate by switching between closed and open conformations depending on the voltage difference across the membrane. In the open conformation they allow Na(+) ions to selectively pass through the pore, along their electrochemical gradient. The influx of Na+ ions provokes membrane depolarization, initiating the propagation of electrical signals throughout cells and tissues. This Danio rerio (Zebrafish) protein is Sodium channel protein type 4 subunit alpha B (scn4ab).